A 73-amino-acid polypeptide reads, in one-letter code: MKADTHPDYHIIDVKMTDGTVVQMKSTWGKEGDQLSLDIDPSAHPAWTGGSSRLLDTGGRVSKFKNKYAGLGF.

It belongs to the bacterial ribosomal protein bL31 family. Type A subfamily. Part of the 50S ribosomal subunit.

Its function is as follows. Binds the 23S rRNA. The sequence is that of Large ribosomal subunit protein bL31 (rpmE) from Roseobacter denitrificans (strain ATCC 33942 / OCh 114) (Erythrobacter sp. (strain OCh 114)).